We begin with the raw amino-acid sequence, 160 residues long: MSHLPSSFDGAEQDVDEMTFLEKMTFHCKQQPLVPLGTLATTVAVILAAQNVRSGNKRKAQKYFRWRVGLQGATLVALVAGSFIYGTSQKERQSKEDALREKAKLREKLWIQELERRDEETQLRKKRAELARSRAKELEQETQGLQQELRDLQAKTSSSK.

Positions 5–96 constitute an HIG1 domain; it reads PSSFDGAEQD…TSQKERQSKE (92 aa). 2 consecutive transmembrane segments (helical) span residues 33 to 50 and 63 to 85; these read LVPLGTLATTVAVILAAQ and YFRWRVGLQGATLVALVAGSFIY. Positions 86 to 160 form a coiled coil; the sequence is GTSQKERQSK…DLQAKTSSSK (75 aa). The interval 135 to 160 is disordered; sequence AKELEQETQGLQQELRDLQAKTSSSK.

It belongs to the RCF1 family. As to quaternary structure, associates with the respiratory chain complex III/complex IV supercomplex.

The protein resides in the mitochondrion membrane. Cytochrome c oxidase subunit which plays a role in assembly of respiratory supercomplexes. The chain is Respiratory supercomplex factor 1, mitochondrial (RCF1) from Lachancea thermotolerans (strain ATCC 56472 / CBS 6340 / NRRL Y-8284) (Yeast).